A 345-amino-acid polypeptide reads, in one-letter code: NADPH dehydrogenase (345 aa).

23–26 (SPMC) is an FMN binding site. Tyrosine 28 contributes to the substrate binding site. The FMN site is built by alanine 60 and glutamine 102. 164-167 (HGAH) is a binding site for substrate. Residues arginine 215 and 307 to 308 (GR) each bind FMN.

The protein belongs to the NADH:flavin oxidoreductase/NADH oxidase family. NamA subfamily. Homotetramer. FMN serves as cofactor.

The enzyme catalyses A + NADPH + H(+) = AH2 + NADP(+). Functionally, catalyzes the reduction of the double bond of an array of alpha,beta-unsaturated aldehydes and ketones. It also reduces the nitro group of nitroester and nitroaromatic compounds. It could have a role in detoxification processes. This chain is NADPH dehydrogenase, found in Bacillus thuringiensis subsp. konkukian (strain 97-27).